The chain runs to 1045 residues: Pre-mRNA-splicing factor ATP-dependent RNA helicase DHX16 (1045 aa).

The interval 101 to 211 is disordered; it reads EDSEESSEEA…ERSDKKAYEE (111 aa). Phosphoserine occurs at positions 103, 106, and 107. A compositionally biased stretch (basic residues) spans 119 to 131; it reads QKKRKKRKHLRKK. A compositionally biased stretch (acidic residues) spans 135-144; it reads EEEEEEEEEV. Ser164 bears the Phosphoserine mark. Residues 170–211 are compositionally biased toward basic and acidic residues; sequence RTERERLQDLEERDAFAERVRQRDKDRTRNVLERSDKKAYEE. Residues 413 to 577 form the Helicase ATP-binding domain; it reads LAAVANHQIL…FDDAPVFRIP (165 aa). 426 to 433 lines the ATP pocket; sequence GETGSGKT. Positions 524–527 match the DEAH box motif; the sequence is DEAH. The Helicase C-terminal domain maps to 602–775; that stretch reads SVLQIHVTQP…NVVLLLKSLG (174 aa). Thr716 is modified (phosphothreonine). The disordered stretch occupies residues 1026-1045; the sequence is EDPHAKKMPKKTGKTREELG.

It belongs to the DEAD box helicase family. DEAH subfamily. DDX16/PRP8 sub-subfamily. As to quaternary structure, component of pre-catalytic spliceosome complexes. Component of the minor spliceosome, which splices U12-type introns. Interacts with GPKOW. Interacts with TRIM6. Interacts with RIGI.

The protein localises to the nucleus. It is found in the nucleoplasm. It localises to the cytoplasm. The enzyme catalyses ATP + H2O = ADP + phosphate + H(+). Its function is as follows. Required for pre-mRNA splicing as a component of the spliceosome. Contributes to pre-mRNA splicing after spliceosome formation and prior to the first transesterification reaction. As a component of the minor spliceosome, involved in the splicing of U12-type introns in pre-mRNAs. Also plays a role in innate antiviral response by acting as a pattern recognition receptor sensing splicing signals in viral RNA. Mechanistically, TRIM6 promotes the interaction between unanchored 'Lys-48'-polyubiquitin chains and DHX16, leading to DHX16 interaction with RIGI and ssRNA to amplify RIGI-dependent innate antiviral immune responses. This Sus scrofa (Pig) protein is Pre-mRNA-splicing factor ATP-dependent RNA helicase DHX16 (DHX16).